The following is a 1790-amino-acid chain: MTSAKVLYFSGEIPQGDPEGDQRTLFRKLHLLSKERDHVVLASLLECVTLTLKDECSKLSPQYRDLLPPFESVLDLTDHVVQLRKTPLGGAIERVLVLVFQLGSLVAYHEAHPLEYNFTPASTVIIGRGSGLLSAAAIGLSPSIVMVPSIAKEIARISFRFGLVVDKVCRSLEVSSDEINSDGAWVYCVHGIGEKEARDAVNQFNEIKAYPSTNGASVFNVDDAGNSVSIGGPPKTLEALFSESNIFKKTKNVAMRKIQGMWHTDRVYGPEHVEQIVPKIESARELHVPLISPVSGDPFRETEAGPLLEQIMEEILMERVRWDMIIETVSKQLKQLMPKSVQLVSIQPSHYNQNMLERWKSELPDAAVSGLTMMPAILELALEQSPPKDTRSSKIAVVGMSCRFPGSDTTEEFWERLMLGEDMHRHIPPDRFDVETHVDPTGKRHNTSKTSYGCFVDNPGLFDAMFFGMSPREAEQTDPMQRLALVTAYEALEKAGYVDGRGVIHRKRVGTFYGQASDDYREVNSGQEVGTYFIPGGCRAFGPGRINYFLNFWGPSFSVDTACSSSLAAIQAACSSLWSGDIDMAITGGMNILSNSDVYAGLSQGHFLSPTGGCKTWDEGADGYCRSDGVGSVVLKRLEDAEADNDNILAVVLSAATSHSAEAVSITHPHDAAQALLYNQIVRRAGIDPLEVGYVEMHGTGTQAGDPTEMRSVTSVFAPPHIQGSRPIPLHVGSVKANMGHGEAAAGIMAFVKTMLVFQNGIIPPHIGVKTGLNPALPDLDKAGVVIPFRAANWRPTGTKKRLAMVNNFGAAGGNTAMIIEEAKARPRLCEDIREAHAITISAKTAVSLSLNIKRLVEYIESAQDLSLADVAYTVSARRRHYEYRKSVVVRSLAEAIKHLQPHIETAKSQTPTLVKRPPVAFAFAGQGTFYVGIAAQIYRDSPFFRAQIDQFDNLARRQNFPSFLPAINKTCAHEDLPASSIHLAIVCVEVALARMCMTFGIKPCAVIGHSLGEYAALAVAEVLSDSDTVFLVGTRATILESNCSPYTHGMISVRASVDDISREADGLPFEVSCINGPNETVIGGTVENLEAVADRLSKVGYRKTRLDVPHAYHTAQMDNVVNELIRQSQGIAYNTPKIPIMSPRDSSVIETGANIDSSYLPTSLKKAVDFAGALNAAWEAGVVSKSTVWLELSHHPVCSGFINRTLPNTSLTCSTLHRDSDNWTSLLKTLSSLYEVGLNIDWNEYHRPFEHALRLVSAPTYAWNNKDYWIQYRGDWNLTKGQVLPEAELPAVSGFRTSSIHRLYSENYDSSTAHLLGECNMTDLSLKGVIEGHAMNGYGVASSFLHAEMAFTLARRIQEKASLSTFTGMGINVTNFEYHDPVVKDASSLDPYPIVVDAEANLEMGEVQIKWFNPAIEKWYCHAIAYYEDPSTWLSNWSRTTRLVTSRIDALVAMSNKGMANKLTTSLAYTLFGKLVDYSSMYHTMQWVILNEDEAVAEVVFPADTQGDWAVPPHFIDGVVSLSGFILNGGTHFDNVNNFFITPSWKSMRFAKPLAPGGRYLTYVRMIPEGVDDKGRLGSYVGDVYILQDGEIVGVVEAILFRQWPRIMLNRFFQPVGMAPPAPRVEKKRDAGRGTLPSSSSLQEKTTATAVTAKITARFPGSVITPSRSAPISKSGSSPKIVPQLDYSLLTPRTSPNSDERIEKTDSDSGFEEADGANDVTSRAVEILAEELAVDKGLLTDECEIADIGVDSLMSLVISQKLREDLGIEVRDAFYLEVTTIGDLKKLLS.

The interval 20–263 (GDQRTLFRKL…AMRKIQGMWH (244 aa)) is N-terminal acylcarrier protein transacylase domain (SAT). Residues 392–822 (SSKIAVVGMS…GGNTAMIIEE (431 aa)) enclose the Ketosynthase family 3 (KS3) domain. Active-site for beta-ketoacyl synthase activity residues include cysteine 563, histidine 698, and histidine 741. The interval 922–1223 (FAFAGQGTFY…CSTLHRDSDN (302 aa)) is malonyl-CoA:ACP transacylase (MAT) domain. A product template (PT) domain region spans residues 1298-1615 (TSSIHRLYSE…PRIMLNRFFQ (318 aa)). The interval 1302-1435 (HRLYSENYDS…AYYEDPSTWL (134 aa)) is N-terminal hotdog fold. The PKS/mFAS DH domain maps to 1302–1611 (HRLYSENYDS…FRQWPRIMLN (310 aa)). Residue histidine 1334 is the Proton acceptor; for dehydratase activity of the active site. Residues 1460–1611 (MANKLTTSLA…FRQWPRIMLN (152 aa)) form a C-terminal hotdog fold region. The active-site Proton donor; for dehydratase activity is the aspartate 1518. Disordered stretches follow at residues 1621 to 1648 (PPAP…EKTT) and 1686 to 1718 (LDYS…ADGA). The span at 1699–1708 (SDERIEKTDS) shows a compositional bias: basic and acidic residues. One can recognise a Carrier domain in the interval 1716 to 1790 (DGANDVTSRA…TIGDLKKLLS (75 aa)). Serine 1753 bears the O-(pantetheine 4'-phosphoryl)serine mark.

It carries out the reaction 6 malonyl-CoA + acetyl-CoA + 4 H(+) = 2-(2,4-dihydroxy-6-oxidobenzoyl)-5-hydroxy-3-methylbenzenolate + 6 CO2 + 7 CoA + H2O. Its pathway is secondary metabolite biosynthesis; terpenoid biosynthesis. Functionally, norlichexanthone synthase; part of the gene cluster that mediates the biosynthesis of griseofulvin, an important antifungal drug that has been in use for a long time for treating dermatophyte infections. The first step of the pathway is the formation of the heptaketide backbone by gsfA which is initiated by priming with acetyl-CoA, followed by sequential condensations of 6 malonyl-CoA units. The resulting benzophenone can undergo a spontaneous dehydration to form norlichexanthone. However, the true precursor for the griseofulvin biosynthesis is not norlichexanthone, but the heptaketide benzophenone that is O-methylated at 3-OH by gsfB to produce griseophenone D which is further methylated at 9-OH by gsfC to yield griseophenone C. Griseophenone C is then substrate of halogenase gsfI which is responsible for the regio-specific chlorination at the C13 position to form griseophenone B. The cytochrome P450 gsfF catalyzes the coupling of orcinol and phloroglucinol rings in griseophenone B to form desmethyl-dehydrogriseofulvin A which is further methylated at 5-OH by gsfD to yield dehydrogriseofulvin. Finally, gsfE performs stereospecific reduction of enone 18 of dehydrogriseofulvin to afford the final product griseofulvin. This is Non-reducing polyketide synthase gsfA from Penicillium aethiopicum.